Reading from the N-terminus, the 535-residue chain is CTP synthase (535 aa).

The amidoligase domain stretch occupies residues 1 to 267 (MTKFIFVTGG…DDIVIKKLGL (267 aa)). S13 lines the CTP pocket. S13 is a binding site for UTP. 14 to 19 (SLGKGI) serves as a coordination point for ATP. Y54 contributes to the L-glutamine binding site. ATP is bound at residue D71. D71 and E141 together coordinate Mg(2+). CTP is bound by residues 148–150 (DIE), 188–193 (KTKPTQ), and K224. UTP-binding positions include 188–193 (KTKPTQ) and K224. The 243-residue stretch at 292 to 534 (TIGIVGKYVS…IGASLKTNKL (243 aa)) folds into the Glutamine amidotransferase type-1 domain. Residue G354 coordinates L-glutamine. C381 serves as the catalytic Nucleophile; for glutamine hydrolysis. Residues 382–385 (LGMQ), E405, and R462 each bind L-glutamine. Active-site residues include H507 and E509.

The protein belongs to the CTP synthase family. Homotetramer.

It carries out the reaction UTP + L-glutamine + ATP + H2O = CTP + L-glutamate + ADP + phosphate + 2 H(+). It catalyses the reaction L-glutamine + H2O = L-glutamate + NH4(+). The enzyme catalyses UTP + NH4(+) + ATP = CTP + ADP + phosphate + 2 H(+). It participates in pyrimidine metabolism; CTP biosynthesis via de novo pathway; CTP from UDP: step 2/2. Its activity is regulated as follows. Allosterically activated by GTP, when glutamine is the substrate; GTP has no effect on the reaction when ammonia is the substrate. The allosteric effector GTP functions by stabilizing the protein conformation that binds the tetrahedral intermediate(s) formed during glutamine hydrolysis. Inhibited by the product CTP, via allosteric rather than competitive inhibition. Catalyzes the ATP-dependent amination of UTP to CTP with either L-glutamine or ammonia as the source of nitrogen. Regulates intracellular CTP levels through interactions with the four ribonucleotide triphosphates. The sequence is that of CTP synthase from Carboxydothermus hydrogenoformans (strain ATCC BAA-161 / DSM 6008 / Z-2901).